Consider the following 157-residue polypeptide: SsrA-binding protein (157 aa).

The protein belongs to the SmpB family.

The protein resides in the cytoplasm. Required for rescue of stalled ribosomes mediated by trans-translation. Binds to transfer-messenger RNA (tmRNA), required for stable association of tmRNA with ribosomes. tmRNA and SmpB together mimic tRNA shape, replacing the anticodon stem-loop with SmpB. tmRNA is encoded by the ssrA gene; the 2 termini fold to resemble tRNA(Ala) and it encodes a 'tag peptide', a short internal open reading frame. During trans-translation Ala-aminoacylated tmRNA acts like a tRNA, entering the A-site of stalled ribosomes, displacing the stalled mRNA. The ribosome then switches to translate the ORF on the tmRNA; the nascent peptide is terminated with the 'tag peptide' encoded by the tmRNA and targeted for degradation. The ribosome is freed to recommence translation, which seems to be the essential function of trans-translation. The polypeptide is SsrA-binding protein (Rhodococcus jostii (strain RHA1)).